A 202-amino-acid polypeptide reads, in one-letter code: Holliday junction branch migration complex subunit RuvA (202 aa).

The segment at 1–65 is domain I; the sequence is MIAYVEGRLA…EDALELYGFA (65 aa). Positions 66-144 are domain II; it reads TWDERQTFIV…VEDLPAAAPL (79 aa). Positions 145 to 155 are flexible linker; it reads VTGGAPGGVFR. The interval 155 to 202 is domain III; sequence RDALAGLANLGYGEEEASHVLKDVLHGEPDLDVGGALRAALRALARGR.

The protein belongs to the RuvA family. Homotetramer. Forms an RuvA(8)-RuvB(12)-Holliday junction (HJ) complex. HJ DNA is sandwiched between 2 RuvA tetramers; dsDNA enters through RuvA and exits via RuvB. An RuvB hexamer assembles on each DNA strand where it exits the tetramer. Each RuvB hexamer is contacted by two RuvA subunits (via domain III) on 2 adjacent RuvB subunits; this complex drives branch migration. In the full resolvosome a probable DNA-RuvA(4)-RuvB(12)-RuvC(2) complex forms which resolves the HJ.

It is found in the cytoplasm. Functionally, the RuvA-RuvB-RuvC complex processes Holliday junction (HJ) DNA during genetic recombination and DNA repair, while the RuvA-RuvB complex plays an important role in the rescue of blocked DNA replication forks via replication fork reversal (RFR). RuvA specifically binds to HJ cruciform DNA, conferring on it an open structure. The RuvB hexamer acts as an ATP-dependent pump, pulling dsDNA into and through the RuvAB complex. HJ branch migration allows RuvC to scan DNA until it finds its consensus sequence, where it cleaves and resolves the cruciform DNA. This chain is Holliday junction branch migration complex subunit RuvA, found in Nitratidesulfovibrio vulgaris (strain ATCC 29579 / DSM 644 / CCUG 34227 / NCIMB 8303 / VKM B-1760 / Hildenborough) (Desulfovibrio vulgaris).